A 267-amino-acid chain; its full sequence is Tryptophan synthase alpha chain (267 aa).

Residues glutamate 49 and aspartate 60 each act as proton acceptor in the active site.

It belongs to the TrpA family. Tetramer of two alpha and two beta chains.

It catalyses the reaction (1S,2R)-1-C-(indol-3-yl)glycerol 3-phosphate + L-serine = D-glyceraldehyde 3-phosphate + L-tryptophan + H2O. Its pathway is amino-acid biosynthesis; L-tryptophan biosynthesis; L-tryptophan from chorismate: step 5/5. Its function is as follows. The alpha subunit is responsible for the aldol cleavage of indoleglycerol phosphate to indole and glyceraldehyde 3-phosphate. The protein is Tryptophan synthase alpha chain of Salinispora arenicola (strain CNS-205).